The primary structure comprises 255 residues: Hydroxyacylglutathione hydrolase (255 aa).

Zn(2+)-binding residues include H56, H58, D60, H61, H114, D133, and H171.

This sequence belongs to the metallo-beta-lactamase superfamily. Glyoxalase II family. In terms of assembly, monomer. Zn(2+) is required as a cofactor.

It catalyses the reaction an S-(2-hydroxyacyl)glutathione + H2O = a 2-hydroxy carboxylate + glutathione + H(+). Its pathway is secondary metabolite metabolism; methylglyoxal degradation; (R)-lactate from methylglyoxal: step 2/2. Its function is as follows. Thiolesterase that catalyzes the hydrolysis of S-D-lactoyl-glutathione to form glutathione and D-lactic acid. The protein is Hydroxyacylglutathione hydrolase of Chelativorans sp. (strain BNC1).